The sequence spans 300 residues: Lipoyl synthase 2 (300 aa).

Residues C46, C51, C57, C72, C76, C79, and S294 each coordinate [4Fe-4S] cluster. The Radical SAM core domain occupies 58–283 (YAQKTATFLL…GKLAREMGFS (226 aa)).

It belongs to the radical SAM superfamily. Lipoyl synthase family. [4Fe-4S] cluster serves as cofactor.

The protein localises to the cytoplasm. The enzyme catalyses [[Fe-S] cluster scaffold protein carrying a second [4Fe-4S](2+) cluster] + N(6)-octanoyl-L-lysyl-[protein] + 2 oxidized [2Fe-2S]-[ferredoxin] + 2 S-adenosyl-L-methionine + 4 H(+) = [[Fe-S] cluster scaffold protein] + N(6)-[(R)-dihydrolipoyl]-L-lysyl-[protein] + 4 Fe(3+) + 2 hydrogen sulfide + 2 5'-deoxyadenosine + 2 L-methionine + 2 reduced [2Fe-2S]-[ferredoxin]. The protein operates within protein modification; protein lipoylation via endogenous pathway; protein N(6)-(lipoyl)lysine from octanoyl-[acyl-carrier-protein]: step 2/2. Catalyzes the radical-mediated insertion of two sulfur atoms into the C-6 and C-8 positions of the octanoyl moiety bound to the lipoyl domains of lipoate-dependent enzymes, thereby converting the octanoylated domains into lipoylated derivatives. The chain is Lipoyl synthase 2 from Nostoc sp. (strain PCC 7120 / SAG 25.82 / UTEX 2576).